Here is a 197-residue protein sequence, read N- to C-terminus: Phospholipid hydroperoxide glutathione peroxidase GPX4 (197 aa).

Residue Ser-40 is modified to Phosphoserine. Sec-73 is a catalytic residue. Residue Sec-73 is a non-standard amino acid, selenocysteine.

It belongs to the glutathione peroxidase family. In terms of assembly, monomer. Has a tendency to form higher mass oligomers. Interacts with FUNDC1; this interaction promotes GPX4 recruitment into mitochondria through TOM/TIM complex where it is degraded by mitophagy. As to expression, widely expressed with the highest levels in testis, heart, cerebrum, ileum, stomach, liver, jejunum and epididymis. Expressed primarily in testis and sperm midpiece (at protein level). Expressed in brain (at protein level). Expressed in heart, liver and kidney (at protein level). Expressed in retina, especially in inner segments of photoreceptor cells (at protein level). Highly expressed during embryogenesis. Down-regulated between 14.5 dpc and 17.5 dpc. In terms of tissue distribution, highly expressed during embryogenesis. In contrast to isoform Mitochondrial and isoform Nuclear, which are down-regulated between 14.5 dpc and 17.5 dpc, remains constant. As to expression, mainly expressed in sperm. Weakly expressed during embryogenesis. Down-regulated between 14.5 dpc and 17.5 dpc.

The protein localises to the mitochondrion. It is found in the cytoplasm. It localises to the nucleus. It catalyses the reaction a hydroperoxy polyunsaturated fatty acid + 2 glutathione = a hydroxy polyunsaturated fatty acid + glutathione disulfide + H2O. It carries out the reaction 2 glutathione + H2O2 = glutathione disulfide + 2 H2O. The catalysed reaction is tert-butyl hydroperoxide + 2 glutathione = tert-butanol + glutathione disulfide + H2O. The enzyme catalyses cumene hydroperoxide + 2 glutathione = 2-phenylpropan-2-ol + glutathione disulfide + H2O. It catalyses the reaction (9S)-hydroperoxy-(10E,12Z)-octadecadienoate + 2 glutathione = (9S)-hydroxy-(10E,12Z)-octadecadienoate + glutathione disulfide + H2O. It carries out the reaction (13S)-hydroperoxy-(9Z,11E)-octadecadienoate + 2 glutathione = (13S)-hydroxy-(9Z,11E)-octadecadienoate + glutathione disulfide + H2O. The catalysed reaction is (5S)-hydroperoxy-(6E,8Z,11Z,14Z)-eicosatetraenoate + 2 glutathione = (5S)-hydroxy-(6E,8Z,11Z,14Z)-eicosatetraenoate + glutathione disulfide + H2O. The enzyme catalyses (12R)-hydroperoxy-(5Z,8Z,10E,14Z)-eicosatetraenoate + 2 glutathione = (12R)-hydroxy-(5Z,8Z,10E,14Z)-eicosatetraenoate + glutathione disulfide + H2O. It catalyses the reaction (12S)-hydroperoxy-(5Z,8Z,10E,14Z)-eicosatetraenoate + 2 glutathione = (12S)-hydroxy-(5Z,8Z,10E,14Z)-eicosatetraenoate + glutathione disulfide + H2O. It carries out the reaction (15S)-hydroperoxy-(5Z,8Z,11Z,13E)-eicosatetraenoate + 2 glutathione = (15S)-hydroxy-(5Z,8Z,11Z,13E)-eicosatetraenoate + glutathione disulfide + H2O. The catalysed reaction is (5S)-hydroperoxy-(6E,8Z,11Z,14Z,17Z)-eicosapentaenoate + 2 glutathione = (5S)-hydroxy-(6E,8Z,11Z,14Z,17Z)-eicosapentaenoate + glutathione disulfide + H2O. The enzyme catalyses (12S)-hydroperoxy-(5Z,8Z,10E,14Z,17Z)-eicosapentaenoate + 2 glutathione = (12S)-hydroxy-(5Z,8Z,10E,14Z,17Z)-eicosapentaenoate + glutathione disulfide + H2O. It catalyses the reaction (15S)-hydroperoxy-(5Z,8Z,11Z,13E,17Z)-eicosapentaenoate + 2 glutathione = (15S)-hydroxy-(5Z,8Z,11Z,13E,17Z)-eicosapentaenoate + glutathione disulfide + H2O. It carries out the reaction (15S)-hydroperoxy-(11Z,13E)-eicosadienoate + 2 glutathione = (15S)-hydroxy-(11Z,13E)-eicosadienoate + glutathione disulfide + H2O. The catalysed reaction is (17S)-hydroperoxy-(4Z,7Z,10Z,13Z,15E,19Z)-docosahexaenoate + 2 glutathione = (17S)-hydroxy-(4Z,7Z,10Z,13Z,15E,19Z)-docosahexaenoate + glutathione disulfide + H2O. The enzyme catalyses a hydroperoxy-1,2-diacyl-glycero-3-phosphocholine + 2 glutathione = a hydroxy-1,2-diacyl-glycero-3-phosphocholine + glutathione disulfide + H2O. Functionally, essential antioxidant peroxidase that directly reduces phospholipid hydroperoxide even if they are incorporated in membranes and lipoproteins. Can also reduce fatty acid hydroperoxide, cholesterol hydroperoxide and thymine hydroperoxide. Plays a key role in protecting cells from oxidative damage by preventing membrane lipid peroxidation. Required to prevent cells from ferroptosis, a non-apoptotic cell death resulting from an iron-dependent accumulation of lipid reactive oxygen species. The presence of selenocysteine (Sec) versus Cys at the active site is essential for life: it provides resistance to overoxidation and prevents cells against ferroptosis. The presence of Sec at the active site is also essential for the survival of a specific type of parvalbumin-positive interneurons, thereby preventing against fatal epileptic seizures. May be required to protect cells from the toxicity of ingested lipid hydroperoxides. Required for normal sperm development and male fertility. Essential for maturation and survival of photoreceptor cells. Plays a role in a primary T-cell response to viral and parasitic infection by protecting T-cells from ferroptosis and by supporting T-cell expansion. Plays a role of glutathione peroxidase in platelets in the arachidonic acid metabolism. Reduces hydroperoxy ester lipids formed by a 15-lipoxygenase that may play a role as down-regulator of the cellular 15-lipoxygenase pathway. Can also reduce small soluble hydroperoxides such as H2O2 and tert-butyl hydroperoxide. In terms of biological role, specifically able to suppress the production of leukotriene and prostaglandin in response to several stimuli by reducing fatty acid hydroperoxide. Specifically required to prevent mitochondrial cell death by mediating reduction of cardiolipin hydroperoxide. Also required for normal sperm development and male fertility. Its function is as follows. Required for male fertility by stabilizing the condensed chromatin in sperm nuclei. In Mus musculus (Mouse), this protein is Phospholipid hydroperoxide glutathione peroxidase GPX4.